A 238-amino-acid polypeptide reads, in one-letter code: Uridylate kinase (238 aa).

12–15 (KLSG) serves as a coordination point for ATP. Gly54 contributes to the UMP binding site. ATP is bound by residues Gly55 and Arg59. Residues Asp74 and 135-142 (TGNPFFTT) each bind UMP. 3 residues coordinate ATP: Thr162, Tyr168, and Asp171.

Belongs to the UMP kinase family. As to quaternary structure, homohexamer.

Its subcellular location is the cytoplasm. The catalysed reaction is UMP + ATP = UDP + ADP. Its pathway is pyrimidine metabolism; CTP biosynthesis via de novo pathway; UDP from UMP (UMPK route): step 1/1. Inhibited by UTP. Catalyzes the reversible phosphorylation of UMP to UDP. This is Uridylate kinase from Aromatoleum aromaticum (strain DSM 19018 / LMG 30748 / EbN1) (Azoarcus sp. (strain EbN1)).